The chain runs to 152 residues: Ubiquitin-conjugating enzyme E2 N (152 aa).

Residues 3 to 149 enclose the UBC core domain; it reads GLPRRIIKET…ARAWTRLYAM (147 aa). Residue K82 is modified to N6-acetyllysine. The Glycyl thioester intermediate role is filled by C87. A Glycyl lysine isopeptide (Lys-Gly) (interchain with G-Cter in ISG15) cross-link involves residue K92. S131 bears the Phosphoserine mark.

This sequence belongs to the ubiquitin-conjugating enzyme family. Heterodimer with UBE2V2. Interacts (UBE2V2-UBE2N heterodimer) with the E3 ligase STUB1 (via the U-box domain); the complex has a specific 'Lys-63'-linked polyubiquitination activity. Interacts with RNF8 and RNF168. Interacts with RNF11. Interacts with the E3 ligases, HLTF and SHPRH; the interactions promote the 'Lys-63'-linked polyubiquitination of PCNA upon genotoxic stress and lead to DNA repair. Interacts with ARIH2 (via RING-type 2). Interacts with OTUB1; leading to inhibit E2-conjugating activity. Interacts with GPS2; leading to inhibit E2-conjugating activity. Interacts with RIGI and RNF135; involved in RIGI ubiquitination and activation. In terms of processing, conjugation to ISG15 impairs formation of the thioester bond with ubiquitin but not interaction with UBE2V2.

It catalyses the reaction S-ubiquitinyl-[E1 ubiquitin-activating enzyme]-L-cysteine + [E2 ubiquitin-conjugating enzyme]-L-cysteine = [E1 ubiquitin-activating enzyme]-L-cysteine + S-ubiquitinyl-[E2 ubiquitin-conjugating enzyme]-L-cysteine.. It participates in protein modification; protein ubiquitination. Its activity is regulated as follows. Activity is inhibited by binding to OTUB1, which prevents 'Lys-63'-linked polyubiquitination. Activity is inhibited by GPS2, leading to prevent 'Lys-63'-linked polyubiquitination. The UBE2V1-UBE2N and UBE2V2-UBE2N heterodimers catalyze the synthesis of non-canonical 'Lys-63'-linked polyubiquitin chains. This type of polyubiquitination does not lead to protein degradation by the proteasome. Mediates transcriptional activation of target genes. Plays a role in the control of progress through the cell cycle and differentiation. Plays a role in the error-free DNA repair pathway and contributes to the survival of cells after DNA damage. Acts together with the E3 ligases, HLTF and SHPRH, in the 'Lys-63'-linked poly-ubiquitination of PCNA upon genotoxic stress, which is required for DNA repair. Appears to act together with E3 ligase RNF5 in the 'Lys-63'-linked polyubiquitination of JKAMP thereby regulating JKAMP function by decreasing its association with components of the proteasome and ERAD. Promotes TRIM5 capsid-specific restriction activity and the UBE2V1-UBE2N heterodimer acts in concert with TRIM5 to generate 'Lys-63'-linked polyubiquitin chains which activate the MAP3K7/TAK1 complex which in turn results in the induction and expression of NF-kappa-B and MAPK-responsive inflammatory genes. Together with RNF135 and UB2V1, catalyzes the viral RNA-dependent 'Lys-63'-linked polyubiquitination of RIGI to activate the downstream signaling pathway that leads to interferon beta production. UBE2V1-UBE2N together with TRAF3IP2 E3 ubiquitin ligase mediate 'Lys-63'-linked polyubiquitination of TRAF6, a component of IL17A-mediated signaling pathway. The polypeptide is Ubiquitin-conjugating enzyme E2 N (Ube2n) (Rattus norvegicus (Rat)).